Consider the following 272-residue polypeptide: Ribosomal RNA small subunit methyltransferase A (272 aa).

Positions 18, 20, 45, 66, 91, and 113 each coordinate S-adenosyl-L-methionine.

This sequence belongs to the class I-like SAM-binding methyltransferase superfamily. rRNA adenine N(6)-methyltransferase family. RsmA subfamily.

The protein localises to the cytoplasm. The enzyme catalyses adenosine(1518)/adenosine(1519) in 16S rRNA + 4 S-adenosyl-L-methionine = N(6)-dimethyladenosine(1518)/N(6)-dimethyladenosine(1519) in 16S rRNA + 4 S-adenosyl-L-homocysteine + 4 H(+). In terms of biological role, specifically dimethylates two adjacent adenosines (A1518 and A1519) in the loop of a conserved hairpin near the 3'-end of 16S rRNA in the 30S particle. May play a critical role in biogenesis of 30S subunits. In Yersinia enterocolitica serotype O:8 / biotype 1B (strain NCTC 13174 / 8081), this protein is Ribosomal RNA small subunit methyltransferase A.